A 386-amino-acid chain; its full sequence is Cytochrome b (386 aa).

A run of 4 helical transmembrane segments spans residues 32 to 52, 76 to 98, 113 to 133, and 179 to 199; these read LGSLLGLCLVIQIASGIFLAM, YLIRYIHANGASFFFVCMYAHIG, VWVIGVVIFIITMATAFLGYC, and FFALHYLCPFILAALVIMHLM. Residues H82 and H96 each coordinate heme b. The heme b site is built by H183 and H197. H202 serves as a coordination point for a ubiquinone. Transmembrane regions (helical) follow at residues 225-245, 289-309, 321-341, and 348-368; these read FVFKDLVTVFVFLLIFSLFVF, LGGVIAMFAAILILLVLPVTD, ISKTFFFLFLYNFILLGQLGQ, and FIQLGQFATLNYFLYFIFIVP.

The protein belongs to the cytochrome b family. Fungal cytochrome b-c1 complex contains 10 subunits; 3 respiratory subunits, 2 core proteins and 5 low-molecular weight proteins. Cytochrome b-c1 complex is a homodimer. Heme b is required as a cofactor.

It localises to the mitochondrion inner membrane. Its function is as follows. Component of the ubiquinol-cytochrome c reductase complex (complex III or cytochrome b-c1 complex) that is part of the mitochondrial respiratory chain. The b-c1 complex mediates electron transfer from ubiquinol to cytochrome c. Contributes to the generation of a proton gradient across the mitochondrial membrane that is then used for ATP synthesis. In Wickerhamomyces canadensis (Yeast), this protein is Cytochrome b (COB).